Reading from the N-terminus, the 274-residue chain is Rhamnulose-1-phosphate aldolase (274 aa).

Glutamate 117 is an active-site residue. The Zn(2+) site is built by histidine 141, histidine 143, and histidine 212.

Belongs to the aldolase class II family. RhaD subfamily. As to quaternary structure, homotetramer. Requires Zn(2+) as cofactor.

It localises to the cytoplasm. The enzyme catalyses L-rhamnulose 1-phosphate = (S)-lactaldehyde + dihydroxyacetone phosphate. The protein operates within carbohydrate degradation; L-rhamnose degradation; glycerone phosphate from L-rhamnose: step 3/3. Its function is as follows. Catalyzes the reversible cleavage of L-rhamnulose-1-phosphate to dihydroxyacetone phosphate (DHAP) and L-lactaldehyde. The protein is Rhamnulose-1-phosphate aldolase of Escherichia coli O17:K52:H18 (strain UMN026 / ExPEC).